Consider the following 614-residue polypeptide: Fimbrin (614 aa).

EF-hand domains lie at 16–50 and 51–86; these read EEIL…DSKK and GSYD…LKKG. Positions 29, 31, 35, 40, 66, 68, 70, and 75 each coordinate Ca(2+). Actin-binding regions lie at residues 98–368 and 369–614; these read TIKG…GLEP and LNEE…LMAV. 4 consecutive Calponin-homology (CH) domains span residues 112-233, 261-364, 385-495, and 508-614; these read EEER…RRGL, LPPE…NTHP, EREA…RMNI, and TLSD…LMAV.

Its subcellular location is the cytoplasm. It is found in the cytoskeleton. The protein localises to the actin patch. Its function is as follows. Binds to actin, and functionally associates with actin structures involved in the development and maintenance of cell polarity. Plays a role in cytokinesis. Plays important roles in mating and in spore formation. The protein is Fimbrin (fim1) of Schizosaccharomyces pombe (strain 972 / ATCC 24843) (Fission yeast).